The following is a 157-amino-acid chain: uncharacterized protein (157 aa).

This is an uncharacterized protein from Caenorhabditis elegans.